Reading from the N-terminus, the 518-residue chain is MSDYLLQMNGIVKTFGGVKALNGIDLKVRPGECVGLCGENGAGKSTLMKILSAVYPHGTWDGEILWDGQPLKAQSISETEAAGIVIIHQELTLVPDLSVAENIFMGHELTLPGGRMNYPAMIHRAEALMRELKVPDMNVSLPVSQYGGGYQQLVEIAKALNKQARLLILDEPSSALTRSEIEVLLDIIRDLKAKGVACVYISHKLDEVAAVCDTISVIRDGQHIATTAMENMDIPQIITQMVGREMSSLYPTEPHDIGEVIFEARHITCYDVDNPKRKRVDDVSFSLRRGEILGIAGLVGAGRTELVTALFGAYPGRHEGEVWLDGHPIDTRTPLKSIRAGVCLVPEDRKRQGIIPDLGVGQNITLAVLDSFSKLTRIDAEAELGSIDREISRLHLKTASPFLPITSLSGGNQQKAVLAKMLLTRPRVLILDEPTRGVDVGAKYEIYKLMGMLAAEGVSIIMVSSELAEVLGVSDRVLVIGEGRLQGDFVNHELTQEQVLAAALSQPDSHNNKDRKSA.

ABC transporter domains are found at residues 6-245 (LQMN…VGRE) and 262-507 (FEAR…LSQP). Residue 38 to 45 (GENGAGKS) coordinates ATP.

This sequence belongs to the ABC transporter superfamily. Xylose importer (TC 3.A.1.2.4) family. The complex is composed of two ATP-binding proteins (XylG), two transmembrane proteins (XylH) and a solute-binding protein (XylF).

It localises to the cell inner membrane. The enzyme catalyses D-xylose(out) + ATP + H2O = D-xylose(in) + ADP + phosphate + H(+). Functionally, part of the ABC transporter complex XylFGH involved in xylose import. Responsible for energy coupling to the transport system. The sequence is that of Xylose import ATP-binding protein XylG from Pseudomonas fluorescens (strain Pf0-1).